The primary structure comprises 133 residues: Alpha-amylase inhibitor/endochitinase (133 aa).

Glutamate 30 serves as the catalytic Proton donor.

This sequence belongs to the glycosyl hydrolase 19 family. Chitinase class I subfamily.

It catalyses the reaction Random endo-hydrolysis of N-acetyl-beta-D-glucosaminide (1-&gt;4)-beta-linkages in chitin and chitodextrins.. In terms of biological role, this protein functions both as an alpha-amylase inhibitor and as a chitinase. The chain is Alpha-amylase inhibitor/endochitinase from Coix lacryma-jobi (Job's tears).